A 216-amino-acid chain; its full sequence is PRA1 family protein B6 (216 aa).

A2 bears the N-acetylalanine mark. 5 consecutive transmembrane segments (helical) span residues 83–103 (LVAI…FLLA), 105–125 (LAAS…LVIG), 135–155 (LGIL…GSLL), 159–179 (LAVG…EDLF), and 186–206 (IGSG…AAAI).

Belongs to the PRA1 family. In terms of assembly, interacts with PRA1B1, PRA1B2, PRA1B3, PRA1B4, PRA1B5 and PRA1E. In terms of tissue distribution, expressed in hypocotyls, roots, lateral roots, lateral root caps, columella cells, leaves and stomata.

It is found in the endoplasmic reticulum membrane. In terms of biological role, may be involved in both secretory and endocytic intracellular trafficking in the endosomal/prevacuolar compartments. This chain is PRA1 family protein B6 (PRA1B6), found in Arabidopsis thaliana (Mouse-ear cress).